The following is a 154-amino-acid chain: Aspartate carbamoyltransferase regulatory chain (154 aa).

Zn(2+) contacts are provided by Cys109, Cys114, Cys138, and Cys141.

This sequence belongs to the PyrI family. Contains catalytic and regulatory chains. Zn(2+) is required as a cofactor.

In terms of biological role, involved in allosteric regulation of aspartate carbamoyltransferase. This Aliivibrio fischeri (strain ATCC 700601 / ES114) (Vibrio fischeri) protein is Aspartate carbamoyltransferase regulatory chain.